Consider the following 107-residue polypeptide: UPF0145 protein YbjQ (107 aa).

The protein belongs to the UPF0145 family.

The polypeptide is UPF0145 protein YbjQ (Salmonella dublin (strain CT_02021853)).